The chain runs to 208 residues: Thymidylate kinase (208 aa).

Residue 11-18 (GGEGAGKS) participates in ATP binding.

Belongs to the thymidylate kinase family.

The catalysed reaction is dTMP + ATP = dTDP + ADP. In terms of biological role, phosphorylation of dTMP to form dTDP in both de novo and salvage pathways of dTTP synthesis. The sequence is that of Thymidylate kinase (tmk) from Caulobacter vibrioides (strain ATCC 19089 / CIP 103742 / CB 15) (Caulobacter crescentus).